An 854-amino-acid polypeptide reads, in one-letter code: Putative COX1/OXI3 intron 2 protein (854 aa).

A Reverse transcriptase domain is found at 329–613; that stretch reads LSKDINTNMF…EGVSFLGYDV (285 aa).

It is found in the mitochondrion. This is Putative COX1/OXI3 intron 2 protein (AI2) from Saccharomyces cerevisiae (strain ATCC 204508 / S288c) (Baker's yeast).